A 400-amino-acid chain; its full sequence is MGGWLPKPRKGMGTNLSVPNPLGFFPDHQLDPAFGANSNNPDWDFNPIKDHWPQANQVGVGAFGPGFTPPHGGVLGWSPQAQGTLTTVPAVPPPASANRQSGRQPTPISPPLRDSHPQAIKWNSPAFHQALQDPRVKGLYFPAGGSSSGTVSPVPNIASHISSISSRTGDPAPTMENITSGFLGPLLVLQAGFFLLTRILTIPQSLDSWWTSLNFLGGSPVCLGQNSQSPTSNHSPTSCPPICPGYRWMCLRRFIIFLFILLLCLIFLLVLLDYQGMLPVCPLIPGSTTTSTGPCRTCTTPAQGNSMFPSCCCTKPTDGNCTCIPIPSSWAFAKYLWEWASVRFSWLSLLVPFVQWFVGLSPTVWLSVIWMMWYWGPRLYNILSPFIPLLPIFFCLWVYI.

Residue Gly2 is the site of N-myristoyl glycine; by host attachment. The tract at residues 2–119 is pre-S1; sequence GGWLPKPRKG…PPLRDSHPQA (118 aa). The pre-S stretch occupies residues 2–174; that stretch reads GGWLPKPRKG…SSRTGDPAPT (173 aa). At 2-181 the chain is on the virion surface; in external conformation side; it reads GGWLPKPRKG…APTMENITSG (180 aa). Over 2 to 253 the chain is Intravirion; in internal conformation; it reads GGWLPKPRKG…PGYRWMCLRR (252 aa). The segment at 84–115 is disordered; the sequence is TLTTVPAVPPPASANRQSGRQPTPISPPLRDS. Residues 97-106 show a composition bias toward polar residues; that stretch reads ANRQSGRQPT. A pre-S2 region spans residues 120 to 174; that stretch reads IKWNSPAFHQALQDPRVKGLYFPAGGSSSGTVSPVPNIASHISSISSRTGDPAPT. The chain crosses the membrane as a helical span at residues 182–202; sequence FLGPLLVLQAGFFLLTRILTI. The Intravirion; in external conformation segment spans residues 203 to 253; sequence PQSLDSWWTSLNFLGGSPVCLGQNSQSPTSNHSPTSCPPICPGYRWMCLRR. A helical membrane pass occupies residues 254-274; the sequence is FIIFLFILLLCLIFLLVLLDY. Topologically, residues 275–348 are virion surface; it reads QGMLPVCPLI…WASVRFSWLS (74 aa). An N-linked (GlcNAc...) asparagine; by host glycan is attached at Asn320. The chain crosses the membrane as a helical span at residues 349–369; it reads LLVPFVQWFVGLSPTVWLSVI. Topologically, residues 370–375 are intravirion; sequence WMMWYW. Residues 376-398 traverse the membrane as a helical segment; that stretch reads GPRLYNILSPFIPLLPIFFCLWV. The Virion surface portion of the chain corresponds to 399–400; the sequence is YI.

This sequence belongs to the orthohepadnavirus major surface antigen family. As to quaternary structure, li-HBsAg interacts with capsid protein and with HDV Large delta antigen. Isoform M associates with host chaperone CANX through its pre-S2 N glycan. This association may be essential for M proper secretion. In terms of processing, isoform M is N-terminally acetylated by host at a ratio of 90%, and N-glycosylated by host at the pre-S2 region. Post-translationally, myristoylated.

The protein localises to the virion membrane. Functionally, the large envelope protein exists in two topological conformations, one which is termed 'external' or Le-HBsAg and the other 'internal' or Li-HBsAg. In its external conformation the protein attaches the virus to cell receptors and thereby initiating infection. This interaction determines the species specificity and liver tropism. This attachment induces virion internalization predominantly through caveolin-mediated endocytosis. The large envelope protein also assures fusion between virion membrane and endosomal membrane. In its internal conformation the protein plays a role in virion morphogenesis and mediates the contact with the nucleocapsid like a matrix protein. In terms of biological role, the middle envelope protein plays an important role in the budding of the virion. It is involved in the induction of budding in a nucleocapsid independent way. In this process the majority of envelope proteins bud to form subviral lipoprotein particles of 22 nm of diameter that do not contain a nucleocapsid. This Hepatitis B virus genotype A3 (isolate Cameroon/CMR983/1994) (HBV-A) protein is Large envelope protein.